A 245-amino-acid chain; its full sequence is tRNA1(Val) (adenine(37)-N6)-methyltransferase (245 aa).

Belongs to the methyltransferase superfamily. tRNA (adenine-N(6)-)-methyltransferase family.

It localises to the cytoplasm. It catalyses the reaction adenosine(37) in tRNA1(Val) + S-adenosyl-L-methionine = N(6)-methyladenosine(37) in tRNA1(Val) + S-adenosyl-L-homocysteine + H(+). Its function is as follows. Specifically methylates the adenine in position 37 of tRNA(1)(Val) (anticodon cmo5UAC). This chain is tRNA1(Val) (adenine(37)-N6)-methyltransferase, found in Escherichia coli O6:K15:H31 (strain 536 / UPEC).